Reading from the N-terminus, the 628-residue chain is Propionate--CoA ligase (628 aa).

It belongs to the ATP-dependent AMP-binding enzyme family.

The enzyme catalyses propanoate + ATP + CoA = propanoyl-CoA + AMP + diphosphate. The protein operates within organic acid metabolism; propanoate degradation. Functionally, catalyzes the synthesis of propionyl-CoA from propionate and CoA. Also converts acetate to acetyl-CoA but with a lower specific activity. The polypeptide is Propionate--CoA ligase (prpE) (Escherichia coli (strain K12)).